Here is an 848-residue protein sequence, read N- to C-terminus: Alanine--tRNA ligase (848 aa).

Zn(2+) is bound by residues His553, His557, Cys654, and His658.

Belongs to the class-II aminoacyl-tRNA synthetase family. It depends on Zn(2+) as a cofactor.

Its subcellular location is the cytoplasm. It catalyses the reaction tRNA(Ala) + L-alanine + ATP = L-alanyl-tRNA(Ala) + AMP + diphosphate. Its function is as follows. Catalyzes the attachment of alanine to tRNA(Ala) in a two-step reaction: alanine is first activated by ATP to form Ala-AMP and then transferred to the acceptor end of tRNA(Ala). Also edits incorrectly charged Ser-tRNA(Ala) and Gly-tRNA(Ala) via its editing domain. In Neorickettsia sennetsu (strain ATCC VR-367 / Miyayama) (Ehrlichia sennetsu), this protein is Alanine--tRNA ligase.